Here is a 338-residue protein sequence, read N- to C-terminus: Inorganic pyrophosphatase (338 aa).

R129 is a diphosphate binding site. Mg(2+) is bound by residues D166, D171, and D203.

The protein belongs to the PPase family. In terms of assembly, component of the NURF complex composed of Caf1-55, E(bx), Nurf-38 and Iswi. Requires Mg(2+) as cofactor.

It localises to the cytoplasm. The protein localises to the nucleus. The enzyme catalyses diphosphate + H2O = 2 phosphate + H(+). Its function is as follows. Component of NURF (nucleosome remodeling factor), a complex which catalyzes ATP-dependent nucleosome sliding and facilitates transcription of chromatin. NURF is required for homeotic gene expression, proper larval blood cell development, normal male X chromosome morphology, ecdysteroid signaling and metamorphosis. Inorganic pyrophosphatase (PPase), hydrolyzes inorganic pyrophosphate to inorganic phosphate, essential for driving critical biosynthetic reactions including transcription, replication, and DNA repair. This Drosophila melanogaster (Fruit fly) protein is Inorganic pyrophosphatase (Nurf-38).